Here is a 223-residue protein sequence, read N- to C-terminus: MPKKFQGENTKSAAARARRAEAKAAADAKKQKELEDAYWKDDDKHVMRKEQRKEEKEKRRLDQLERKKETQRLLEEEDSKLKGGKAPRVATSSKVTRAQIEDTLRRDHQLREAPDTAEKAKSHLEVPLEENVNRRVLEEGSVEARTIEDAIAVLSVAEEAADRHPERRMRAAFTAFEEAQLPRLKQENPNMRLSQLKQLLKKEWLRSPDNPMNQRAVPFNAPK.

The interval 1 to 126 (MPKKFQGENT…AEKAKSHLEV (126 aa)) is disordered. The stretch at 15–82 (ARARRAEAKA…LLEEEDSKLK (68 aa)) forms a coiled coil. Composition is skewed to basic and acidic residues over residues 18–74 (RRAE…QRLL) and 99–126 (QIED…HLEV). A phosphoserine mark is found at Ser-141 and Ser-194. The tract at residues 204–223 (WLRSPDNPMNQRAVPFNAPK) is disordered.

Belongs to the CCDC124 family. As to quaternary structure, associates with translationally inactive ribosomes in the nonrotated state. Interacts with RASGEF1B. Ubiquitously expressed.

Its subcellular location is the cytoplasm. It localises to the cytoskeleton. It is found in the microtubule organizing center. The protein resides in the centrosome. The protein localises to the midbody. Functionally, ribosome-binding protein involved in ribosome hibernation: associates with translationally inactive ribosomes and stabilizes the nonrotated conformation of the 80S ribosome, thereby promoting ribosome preservation and storage. Also required for proper progression of late cytokinetic stages. In Homo sapiens (Human), this protein is Coiled-coil domain-containing protein 124.